The primary structure comprises 254 residues: 5'-nucleotidase SurE (254 aa).

Positions 8, 9, 40, and 93 each coordinate a divalent metal cation.

The protein belongs to the SurE nucleotidase family. A divalent metal cation is required as a cofactor.

It localises to the cytoplasm. The enzyme catalyses a ribonucleoside 5'-phosphate + H2O = a ribonucleoside + phosphate. Functionally, nucleotidase that shows phosphatase activity on nucleoside 5'-monophosphates. The protein is 5'-nucleotidase SurE of Methylorubrum populi (strain ATCC BAA-705 / NCIMB 13946 / BJ001) (Methylobacterium populi).